The following is a 450-amino-acid chain: Probable ECA polymerase (450 aa).

Transmembrane regions (helical) follow at residues Phe6–Phe26, Val37–Leu57, Val63–Ala83, Val118–Leu138, Gly155–Leu175, Ala181–Gly201, Ile207–Trp227, Met228–Tyr248, Leu341–Ile361, Tyr378–Ala398, and Val410–Phe430.

It belongs to the WzyE family. In terms of assembly, probably part of a complex composed of WzxE, WzyE and WzzE.

It localises to the cell inner membrane. Its pathway is bacterial outer membrane biogenesis; enterobacterial common antigen biosynthesis. Its function is as follows. Probably involved in the polymerization of enterobacterial common antigen (ECA) trisaccharide repeat units. This chain is Probable ECA polymerase, found in Escherichia coli O139:H28 (strain E24377A / ETEC).